Here is a 351-residue protein sequence, read N- to C-terminus: Phospho-N-acetylmuramoyl-pentapeptide-transferase (351 aa).

The next 10 helical transmembrane spans lie at 22 to 42, 65 to 85, 87 to 107, 128 to 148, 158 to 178, 190 to 210, 225 to 245, 254 to 274, 279 to 299, and 328 to 348; these read ILAF…FISW, TPTM…LITT, FNKY…LGFI, FLLQ…VGFD, YPIF…IVAM, GLAT…LYIV, LGVG…LGFL, VFMG…LAIV, LLLI…ILQV, and KITI…ILSI.

The protein belongs to the glycosyltransferase 4 family. MraY subfamily. Mg(2+) serves as cofactor.

It localises to the cell inner membrane. The catalysed reaction is UDP-N-acetyl-alpha-D-muramoyl-L-alanyl-gamma-D-glutamyl-meso-2,6-diaminopimeloyl-D-alanyl-D-alanine + di-trans,octa-cis-undecaprenyl phosphate = di-trans,octa-cis-undecaprenyl diphospho-N-acetyl-alpha-D-muramoyl-L-alanyl-D-glutamyl-meso-2,6-diaminopimeloyl-D-alanyl-D-alanine + UMP. It participates in cell wall biogenesis; peptidoglycan biosynthesis. Its function is as follows. Catalyzes the initial step of the lipid cycle reactions in the biosynthesis of the cell wall peptidoglycan: transfers peptidoglycan precursor phospho-MurNAc-pentapeptide from UDP-MurNAc-pentapeptide onto the lipid carrier undecaprenyl phosphate, yielding undecaprenyl-pyrophosphoryl-MurNAc-pentapeptide, known as lipid I. The protein is Phospho-N-acetylmuramoyl-pentapeptide-transferase of Nautilia profundicola (strain ATCC BAA-1463 / DSM 18972 / AmH).